Here is a 331-residue protein sequence, read N- to C-terminus: Decarboxylase orsB (331 aa).

Residues H11, H157, and D284 each contribute to the Zn(2+) site.

Belongs to the metallo-dependent hydrolases superfamily. ACMSD family.

Its pathway is secondary metabolite biosynthesis. Decarboxylase; part of the gene cluster that mediates the biosynthesis of orsellinic acid, as well as of the cathepsin K inhibitors F9775 A and F9775 B. The non-reducing polyketide synthase orsA produces orsellinic acid by condensing acetyl-CoA with 3 malonyl-CoA units. Further modifications by the decarboxylase orsB and the tyrosinase-like protein orsC lead to the production of F9775 A and F9775 B. The functions of orsD and orsE remain unclear since only orsB and orsC are required to convert orsellinic acid into F9775 A and F9775 B. The protein is Decarboxylase orsB of Emericella nidulans (strain FGSC A4 / ATCC 38163 / CBS 112.46 / NRRL 194 / M139) (Aspergillus nidulans).